Consider the following 444-residue polypeptide: Ras-related protein RabX (444 aa).

GTP is bound at residue 29 to 36 (GGDVCSKN). The Effector region signature appears at 51 to 58 (LIQVFDDY). 73-77 (EFSSI) lines the GTP pocket. The disordered stretch occupies residues 91 to 136 (ENNKNKNNNNNYNYNNNNYNNNNNNNNNNNNNNNNNNNNNNNNNNS). A compositionally biased stretch (low complexity) spans 95–135 (NKNNNNNYNYNNNNYNNNNNNNNNNNNNNNNNNNNNNNNNN). Residue 207 to 210 (NDSN) participates in GTP binding. 2 disordered regions span residues 213–232 (TPNF…SNII) and 298–401 (LQGD…NNDL). Composition is skewed to low complexity over residues 217–232 (SDSS…SNII) and 303–399 (NNNN…TYNN). Residue Cys439 is the site of S-palmitoyl cysteine attachment. The residue at position 441 (Cys441) is a Cysteine methyl ester. Residue Cys441 is the site of S-geranylgeranyl cysteine attachment. A propeptide spans 442 to 444 (NLM) (removed in mature form).

This sequence belongs to the small GTPase superfamily. Rab family.

The protein localises to the cell membrane. The protein is Ras-related protein RabX (rabX) of Dictyostelium discoideum (Social amoeba).